The following is a 213-amino-acid chain: tRNA (guanine-N(7)-)-methyltransferase (213 aa).

Glutamate 43, aspartate 68, asparagine 95, and asparagine 117 together coordinate S-adenosyl-L-methionine. Residues aspartate 153 and 190–193 (TEYE) each bind substrate.

Belongs to the class I-like SAM-binding methyltransferase superfamily. TrmB family.

The catalysed reaction is guanosine(46) in tRNA + S-adenosyl-L-methionine = N(7)-methylguanosine(46) in tRNA + S-adenosyl-L-homocysteine. It functions in the pathway tRNA modification; N(7)-methylguanine-tRNA biosynthesis. Its function is as follows. Catalyzes the formation of N(7)-methylguanine at position 46 (m7G46) in tRNA. This chain is tRNA (guanine-N(7)-)-methyltransferase, found in Desulfitobacterium hafniense (strain DSM 10664 / DCB-2).